A 248-amino-acid polypeptide reads, in one-letter code: DNA/RNA-binding protein ALBA1 (248 aa).

Positions 217 to 248 (GRDGGYRGGNRGGSRSGFRGGRGGFRGGRALS) are disordered. Residues 222–248 (YRGGNRGGSRSGFRGGRGGFRGGRALS) show a composition bias toward gly residues.

It belongs to the histone-like Alba family. May form homodimers. Identified in a TARE6-associated complex consisting of over 30 proteins and including ALBA1, ALBA2 and ALBA4; the complex binds to the non-coding subtelomeric repeat region TARE6.

Its subcellular location is the nucleus. The protein resides in the chromosome. The protein localises to the telomere. It localises to the cytoplasm. Its function is as follows. Possesses DNA- and RNA-binding activities. During the asexual blood stages binds to a sub-population of mature mRNAs and regulates the timing of their translation. Binds to DNA with relaxed sequence specificity. Associates with the subtelomeric TARE6 repeats. This is DNA/RNA-binding protein ALBA1 from Plasmodium falciparum (isolate 3D7).